The sequence spans 267 residues: MKATVLTLAVLFLTGSQARHFWQQDEPPQTPWDRVKDLVTVYVEALKDSGKDYVSQFEGSALGKQLNLKLLDNWDSVTSTVSKLREQLGPVTQEFWDNLEKETEGLRQEMSKDLEEVKAKVQPYLDDFQKKWQEEMELYRQKVEPLRAELHEGTRQKLHELHEKLSPLGEEVRDRARAHVDALRTHLAPYSDELRQRLAARLEALKENGGARLAEYHAKASEHLSTLSEKAKPALEDLRQGLLPVLESFKVSFLSALEEYTKKLSTQ.

Residues 1–18 form the signal peptide; it reads MKATVLTLAVLFLTGSQA. 2 consecutive repeat copies span residues 68 to 89 and 90 to 111. Positions 68 to 267 are 10 X approximate tandem repeats; the sequence is LKLLDNWDSV…EEYTKKLSTQ (200 aa). Methionine sulfoxide is present on Met-110. One copy of the 3; half-length repeat lies at 112-122; it reads KDLEEVKAKVQ. 5 tandem repeats follow at residues 123 to 144, 145 to 166, 167 to 188, 189 to 210, and 211 to 232. Met-136 carries the post-translational modification Methionine sulfoxide. One copy of the 9; half-length repeat lies at 233–243; sequence PALEDLRQGLL. Copy 10 of the repeat occupies 244-267; sequence PVLESFKVSFLSALEEYTKKLSTQ.

It belongs to the apolipoprotein A1/A4/E family. Homodimer. Interacts with APOA1BP and CLU. Component of a sperm activating protein complex (SPAP), consisting of APOA1, an immunoglobulin heavy chain, an immunoglobulin light chain and albumin. Interacts with NDRG1. Interacts with SCGB3A2. Interacts with NAXE and YJEFN3. In terms of processing, glycosylated. Post-translationally, palmitoylated. Phosphorylation sites are present in the extracellular medium. As to expression, major protein of plasma HDL, also found in chylomicrons.

The protein resides in the secreted. Functionally, participates in the reverse transport of cholesterol from tissues to the liver for excretion by promoting cholesterol efflux from tissues and by acting as a cofactor for the lecithin cholesterol acyltransferase (LCAT). As part of the SPAP complex, activates spermatozoa motility. The protein is Apolipoprotein A-I (APOA1) of Papio hamadryas (Hamadryas baboon).